An 866-amino-acid polypeptide reads, in one-letter code: DNA topoisomerase 3-beta (866 aa).

The 146-residue stretch at 4 to 149 (TVLMVAEKPS…RIFRAKFSSV (146 aa)) folds into the Toprim domain. 3 residues coordinate Mg(2+): E10, D114, and D116. The 421-residue stretch at 165 to 585 (SKDEALAVDA…HVLQQFMKKY (421 aa)) folds into the Topo IA-type catalytic domain. Residues 207–212 (SYGPCQ) form an interaction with DNA region. Y329 acts as the O-(5'-phospho-DNA)-tyrosine intermediate in catalysis. The span at 830 to 853 (MRRGRGRGRGRGRGRGSSRGRRGS) shows a compositional bias: basic residues. The segment at 830-866 (MRRGRGRGRGRGRGRGSSRGRRGSSRHDDPKMSFRDF) is disordered. Positions 854 to 866 (SRHDDPKMSFRDF) are enriched in basic and acidic residues.

This sequence belongs to the type IA topoisomerase family. Requires Mg(2+) as cofactor.

The catalysed reaction is ATP-independent breakage of single-stranded DNA, followed by passage and rejoining.. Functionally, releases the supercoiling and torsional tension of DNA introduced during the DNA replication and transcription by transiently cleaving and rejoining one strand of the DNA duplex. Introduces a single-strand break via transesterification at a target site in duplex DNA. The scissile phosphodiester is attacked by the catalytic tyrosine of the enzyme, resulting in the formation of a DNA-(5'-phosphotyrosyl)-enzyme intermediate and the expulsion of a 3'-OH DNA strand. The free DNA strand than undergoes passage around the unbroken strand thus removing DNA supercoils. Finally, in the religation step, the DNA 3'-OH attacks the covalent intermediate to expel the active-site tyrosine and restore the DNA phosphodiester backbone. This is DNA topoisomerase 3-beta (TOP3B) from Oryza sativa subsp. japonica (Rice).